A 370-amino-acid chain; its full sequence is Cytochrome b (370 aa).

Transmembrane regions (helical) follow at residues 25 to 45 (FGSM…FLAV), 69 to 90 (WLMQ…YIHI), 105 to 125 (WLSG…GYVL), and 170 to 190 (FFAL…LHVM). Positions 75 and 89 each coordinate heme b. Heme b is bound by residues His174 and His188. Residue His193 coordinates a ubiquinone. Helical transmembrane passes span 218-238 (YKDL…VSFS), 280-300 (LGGA…PFTH), 312-332 (FMQM…WTAT), and 339-358 (FTLI…ISNP).

Belongs to the cytochrome b family. The cytochrome bc1 complex contains 3 respiratory subunits (MT-CYB, CYC1 and UQCRFS1), 2 core proteins (UQCRC1 and UQCRC2) and probably 6 low-molecular weight proteins. Heme b serves as cofactor.

It localises to the mitochondrion inner membrane. In terms of biological role, component of the ubiquinol-cytochrome c reductase complex (complex III or cytochrome b-c1 complex) that is part of the mitochondrial respiratory chain. The b-c1 complex mediates electron transfer from ubiquinol to cytochrome c. Contributes to the generation of a proton gradient across the mitochondrial membrane that is then used for ATP synthesis. The protein is Cytochrome b (MT-CYB) of Eunectes notaeus (Yellow anaconda).